The chain runs to 429 residues: Histidine--tRNA ligase (429 aa).

The protein belongs to the class-II aminoacyl-tRNA synthetase family. As to quaternary structure, homodimer.

Its subcellular location is the cytoplasm. The catalysed reaction is tRNA(His) + L-histidine + ATP = L-histidyl-tRNA(His) + AMP + diphosphate + H(+). This Oceanobacillus iheyensis (strain DSM 14371 / CIP 107618 / JCM 11309 / KCTC 3954 / HTE831) protein is Histidine--tRNA ligase.